The primary structure comprises 425 residues: Aromatic prenyl transferase PC-22 (425 aa).

L-tryptophan-binding positions include 83–84 (GI) and Glu92. 9 residues coordinate substrate: Arg107, Lys198, Tyr200, Arg265, Lys267, Tyr269, Tyr345, Tyr410, and Tyr414.

Belongs to the tryptophan dimethylallyltransferase family. Homodimer.

The protein operates within secondary metabolite biosynthesis. In terms of biological role, aromatic prenyl transferase; part of the gene cluster that mediates the biosynthesis of the indole diterpenes penitrems. The geranylgeranyl diphosphate (GGPP) synthase penG catalyzes the first step in penitrem biosynthesis via conversion of farnesyl pyrophosphate and isopentyl pyrophosphate into geranylgeranyl pyrophosphate (GGPP). Condensation of indole-3-glycerol phosphate with GGPP by the prenyl transferase penC then forms 3-geranylgeranylindole (3-GGI). Epoxidation by the FAD-dependent monooxygenase penM leads to a epoxidized-GGI that is substrate of the terpene cyclase penB for cyclization to yield paspaline. Paspaline is subsequently converted to 13-desoxypaxilline by the cytochrome P450 monooxygenase penP, the latter being then converted to paxilline by the cytochrome P450 monooxygenase penQ. Paxilline is converted to beta-paxitriol via C-10 ketoreduction by the short-chain dehydrogenase PC-15 which can be monoprenylated at the C-20 by the indole diterpene prenyltransferase penD. A two-step elimination (acetylation and elimination) process performed by the O-acetyltransferase PC-16 and the P.simplicissimum ptmI-ortholog not yet identified in P.crustosum, leads to the production of the prenylated form of penijanthine. The FAD-linked oxidoreductase ptmO then converts the prenylated form of penijanthine into PC-M5 which is in turn transformed into PC-M4 by the aromatic dimethylallyltransferase PC-22. A series of oxidation steps involving 4 cytochrome P450 monooxygenases (PC-21, PC-05, PC-23, PC-20) and a FAD-dependent monooxygenase (PC-14) are required for the transformation of PC-M4 to penitrems A and E. Synthesis of these final products is proposed to proceed via penitrems D and C (PC-21, PC-05, PC-14) and penitrems B and F (PC-21, PC-05, PC-14, PC-23). The protein is Aromatic prenyl transferase PC-22 of Penicillium crustosum (Blue mold fungus).